The primary structure comprises 870 residues: DNA mismatch repair protein MutS (870 aa).

622–629 (GPNMGGKS) lines the ATP pocket.

It belongs to the DNA mismatch repair MutS family.

Functionally, this protein is involved in the repair of mismatches in DNA. It is possible that it carries out the mismatch recognition step. This protein has a weak ATPase activity. The protein is DNA mismatch repair protein MutS of Methylibium petroleiphilum (strain ATCC BAA-1232 / LMG 22953 / PM1).